The sequence spans 84 residues: Protein SlyX homolog (84 aa).

The protein belongs to the SlyX family.

The protein is Protein SlyX homolog of Mannheimia succiniciproducens (strain KCTC 0769BP / MBEL55E).